The chain runs to 175 residues: MLRRGALSTILKGLNGLSLRSPIPIWHVSASPEVGSKYNLPTVPTTSHVSYRQIAKANFFAGYRPLSANQICVPKVESKTQVSQSQDEEDQPQEYVLSLEDGYLYAQSFSASGSVTQTQPARISTQVWEQICDKLISITPLDLTSVKRKRKLKMNKHKFKKRLRRQRALRKRLGK.

The protein belongs to the mitochondrion-specific ribosomal protein mS38 family. Component of the mitochondrial small ribosomal subunit (mt-SSU). Mature yeast 74S mitochondrial ribosomes consist of a small (37S) and a large (54S) subunit. The 37S small subunit contains a 15S ribosomal RNA (15S mt-rRNA) and at least 32 different proteins. The 54S large subunit contains a 21S rRNA (21S mt-rRNA) and at least 45 different proteins.

It localises to the mitochondrion. The protein resides in the mitochondrion inner membrane. Functionally, component of the mitochondrial ribosome (mitoribosome), a dedicated translation machinery responsible for the synthesis of mitochondrial genome-encoded proteins, including at least some of the essential transmembrane subunits of the mitochondrial respiratory chain. The mitoribosomes are attached to the mitochondrial inner membrane and translation products are cotranslationally integrated into the membrane. mS38 is also involved in the splicing of the COX1 mRNA. The protein is Small ribosomal subunit protein mS38 (cox24) of Schizosaccharomyces pombe (strain 972 / ATCC 24843) (Fission yeast).